The primary structure comprises 327 residues: N-acetylmuramoyl-L-alanine amidase sle1 (327 aa).

The signal sequence occupies residues 1-25 (MRKKIIATVIGTSALAAVTWTNADA). LysM domains follow at residues 27–70 (TTYK…SLKV), 86–129 (STYT…KLKV), and 150–193 (TTYT…KLKV). The interval 68–89 (LKVSGSTSSSTSSNTSTGSTYT) is disordered. Positions 71–87 (SGSTSSSTSSNTSTGST) are enriched in low complexity. In terms of domain architecture, Peptidase C51 spans 203–327 (GSSSTGSAGY…SQVSSYVYIH (125 aa)).

It is found in the secreted. Its subcellular location is the cell surface. It carries out the reaction Hydrolyzes the link between N-acetylmuramoyl residues and L-amino acid residues in certain cell-wall glycopeptides.. Functionally, peptidoglycan hydrolase involved in the splitting of the septum during cell division. The chain is N-acetylmuramoyl-L-alanine amidase sle1 (sle1) from Staphylococcus saprophyticus subsp. saprophyticus (strain ATCC 15305 / DSM 20229 / NCIMB 8711 / NCTC 7292 / S-41).